A 448-amino-acid polypeptide reads, in one-letter code: Probable glycine dehydrogenase (decarboxylating) subunit 1 (448 aa).

It belongs to the GcvP family. N-terminal subunit subfamily. The glycine cleavage system is composed of four proteins: P, T, L and H. In this organism, the P 'protein' is a heterodimer of two subunits.

The catalysed reaction is N(6)-[(R)-lipoyl]-L-lysyl-[glycine-cleavage complex H protein] + glycine + H(+) = N(6)-[(R)-S(8)-aminomethyldihydrolipoyl]-L-lysyl-[glycine-cleavage complex H protein] + CO2. Functionally, the glycine cleavage system catalyzes the degradation of glycine. The P protein binds the alpha-amino group of glycine through its pyridoxal phosphate cofactor; CO(2) is released and the remaining methylamine moiety is then transferred to the lipoamide cofactor of the H protein. The protein is Probable glycine dehydrogenase (decarboxylating) subunit 1 of Staphylococcus aureus (strain USA300).